The chain runs to 1595 residues: DNA-directed RNA polymerase subunit beta'' (1595 aa).

Positions 216, 286, 294, and 297 each coordinate Zn(2+).

This sequence belongs to the RNA polymerase beta' chain family. RpoC2 subfamily. In terms of assembly, in plastids the minimal PEP RNA polymerase catalytic core is composed of four subunits: alpha, beta, beta', and beta''. When a (nuclear-encoded) sigma factor is associated with the core the holoenzyme is formed, which can initiate transcription. The cofactor is Zn(2+).

The protein localises to the plastid. Its subcellular location is the chloroplast. The enzyme catalyses RNA(n) + a ribonucleoside 5'-triphosphate = RNA(n+1) + diphosphate. DNA-dependent RNA polymerase catalyzes the transcription of DNA into RNA using the four ribonucleoside triphosphates as substrates. In Bigelowiella natans (Pedinomonas minutissima), this protein is DNA-directed RNA polymerase subunit beta''.